Here is a 500-residue protein sequence, read N- to C-terminus: Potassium voltage-gated channel subfamily V member 1 (500 aa).

The Cytoplasmic portion of the chain corresponds to methionine 1–arginine 210. The segment covering lysine 168–glutamate 181 has biased composition (basic and acidic residues). A disordered region spans residues lysine 168 to cysteine 189. A helical transmembrane segment spans residues isoleucine 211 to serine 231. Topologically, residues alanine 232–aspartate 238 are extracellular. The helical transmembrane segment at leucine 239–leucine 259 threads the bilayer. Residues arginine 260–asparagine 276 lie on the Cytoplasmic side of the membrane. The helical transmembrane segment at isoleucine 277–glycine 297 threads the bilayer. Residues serine 298–arginine 309 lie on the Extracellular side of the membrane. The helical; Voltage-sensor transmembrane segment at isoleucine 310 to glycine 331 threads the bilayer. Over leucine 332 to glutamate 345 the chain is Cytoplasmic. The helical transmembrane segment at valine 346–phenylalanine 366 threads the bilayer. The Selectivity filter motif lies at threonine 392–aspartate 397. Residues isoleucine 407–isoleucine 427 form a helical membrane-spanning segment. Topologically, residues asparagine 428 to phenylalanine 500 are cytoplasmic.

It belongs to the potassium channel family. V (TC 1.A.1.2) subfamily. Kv8.1/KCNV1 sub-subfamily. In terms of assembly, heteromultimer with KCNB1 and KCNB2. Interacts with KCNC4 and KCND1. Detected in brain.

It localises to the cell membrane. Its function is as follows. Potassium channel subunit that does not form functional channels by itself. Modulates KCNB1 and KCNB2 channel activity by shifting the threshold for inactivation to more negative values and by slowing the rate of inactivation. Can down-regulate the channel activity of KCNB1, KCNB2, KCNC4 and KCND1, possibly by trapping them in intracellular membranes. The sequence is that of Potassium voltage-gated channel subfamily V member 1 (KCNV1) from Homo sapiens (Human).